Consider the following 588-residue polypeptide: Sperm-associated microtubule inner protein 4 (588 aa).

Thr-219 carries the phosphothreonine modification. Phosphoserine occurs at positions 224, 406, 421, 427, and 437. Tyr-441 carries the phosphotyrosine modification. Phosphoserine occurs at positions 457 and 484. Position 512 is a phosphothreonine (Thr-512). Ser-516 is subject to Phosphoserine. Residue Lys-543 forms a Glycyl lysine isopeptide (Lys-Gly) (interchain with G-Cter in SUMO2) linkage. Residue Ser-545 is modified to Phosphoserine.

It localises to the cytoplasm. The protein resides in the cytoskeleton. The protein localises to the microtubule organizing center. It is found in the centrosome. Its subcellular location is the flagellum axoneme. Microtubule inner protein (MIP) part of the dynein-decorated doublet microtubules (DMTs) in flagellum axoneme. May serve to reinforce and thus stabilize the microtubule structure in the sperm flagella. This is Sperm-associated microtubule inner protein 4 (Spmip4) from Rattus norvegicus (Rat).